A 257-amino-acid polypeptide reads, in one-letter code: Probable amino-acid ABC transporter ATP-binding protein y4tH (257 aa).

The ABC transporter domain maps to 6–251 (IVFDKVKKAY…PKEERTREFL (246 aa)). An ATP-binding site is contributed by 38-45 (GPSGSGKS).

This sequence belongs to the ABC transporter superfamily.

The protein resides in the cell inner membrane. In terms of biological role, probably part of a binding-protein-dependent transport system y4tEFGH for an amino acid. Probably responsible for energy coupling to the transport system. In Sinorhizobium fredii (strain NBRC 101917 / NGR234), this protein is Probable amino-acid ABC transporter ATP-binding protein y4tH.